A 191-amino-acid chain; its full sequence is Elongation factor P-like protein (191 aa).

Belongs to the elongation factor P family.

This chain is Elongation factor P-like protein, found in Photobacterium profundum (strain SS9).